Reading from the N-terminus, the 364-residue chain is Probable tartrate dehydrogenase/decarboxylase TtuC (364 aa).

Asp222, Asp246, and Asp250 together coordinate Mn(2+).

Belongs to the isocitrate and isopropylmalate dehydrogenases family. It depends on Mg(2+) as a cofactor. Requires Mn(2+) as cofactor. The cofactor is K(+).

The protein localises to the cytoplasm. It carries out the reaction tartrate + NAD(+) = 2-hydroxy-3-oxosuccinate + NADH + H(+). It catalyses the reaction (2R,3S)-tartrate + NAD(+) = 2-hydroxy-3-oxosuccinate + NADH + H(+). The enzyme catalyses (2R,3R)-tartrate + NAD(+) = 2-hydroxy-3-oxosuccinate + NADH + H(+). The catalysed reaction is (2R,3R)-tartrate + H(+) = (R)-glycerate + CO2. It carries out the reaction (R)-malate + NAD(+) = pyruvate + CO2 + NADH. The protein operates within carbohydrate acid metabolism; tartrate degradation; 2-hydroxy-3-oxosuccinate from L-tartrate: step 1/1. It participates in carbohydrate acid metabolism; tartrate degradation; 2-hydroxy-3-oxosuccinate from meso-tartrate: step 1/1. It functions in the pathway carbohydrate acid metabolism; tartrate degradation; D-glycerate from L-tartrate: step 1/1. Has multiple catalytic activities. Apart from catalyzing the oxidation of (+)-tartrate to oxaloglycolate, also converts meso-tartrate to D-glycerate and catalyzes the oxidative decarboxylation of D-malate to pyruvate. In Agrobacterium vitis (Rhizobium vitis), this protein is Probable tartrate dehydrogenase/decarboxylase TtuC (ttuC).